The chain runs to 389 residues: Allantoicase (389 aa).

It belongs to the allantoicase family.

The catalysed reaction is allantoate + H2O = (S)-ureidoglycolate + urea. It participates in nitrogen metabolism; (S)-allantoin degradation; (S)-ureidoglycolate from allantoate (aminidohydrolase route): step 1/1. Functionally, utilization of purines as secondary nitrogen sources, when primary sources are limiting. This Xenopus tropicalis (Western clawed frog) protein is Allantoicase (allc).